A 319-amino-acid polypeptide reads, in one-letter code: MASLGAAAEPERNLFGKDEAEAYESPEGRRSGRKKRTKIVPVWENKPCGSSRSLVRRIGSHLPLKPCTRACFEALPSASNLYFTDTPMVPTLADIKWIAADDDETYARVRSDTRPLKHKWRPSPLLVMQRNSSVPNLKMKEEKMFCLKKPGLSLNRSSDIQEELSILRSQIARIVAGDSVSSCLGSDSIPVNVDLEASLPDYGPSYQSTTSFVISDITEEDELDVSEYSSASLVDSTISLQRQIETNMSDDDEDSMCLSKSNSFADMMGILKDIHKMKLNRDWSNRNQCLHKEEDPVNLISEVLRQKFALCDPDNVNNE.

The disordered stretch occupies residues 1–37 (MASLGAAAEPERNLFGKDEAEAYESPEGRRSGRKKRT). Positions 9–30 (EPERNLFGKDEAEAYESPEGRR) are enriched in basic and acidic residues.

The protein belongs to the MTFR1 family.

Its subcellular location is the mitochondrion outer membrane. Functionally, mitochondrial protein required for adaptation of miochondrial dynamics to metabolic changes. Regulates mitochondrial morphology at steady state and mediates AMPK-dependent stress-induced mitochondrial fragmentation via the control of OPA1 levels. The protein is Mitochondrial fission regulator 1-like-A (mtfr1l-a) of Xenopus laevis (African clawed frog).